Consider the following 360-residue polypeptide: D-alanine--D-alanine ligase (360 aa).

In terms of domain architecture, ATP-grasp spans 149-353 (KKLMAAEGLP…YEELLDVLVQ (205 aa)). Residue 176-231 (KNLLGLPVFVKPARGGSSIGISRVTAWEDFNKAVGLARAHDEKVIVESEIVGSEVE) participates in ATP binding. Mg(2+) is bound by residues aspartate 308, glutamate 320, and asparagine 322.

Belongs to the D-alanine--D-alanine ligase family. Mg(2+) serves as cofactor. Requires Mn(2+) as cofactor.

Its subcellular location is the cytoplasm. It carries out the reaction 2 D-alanine + ATP = D-alanyl-D-alanine + ADP + phosphate + H(+). It participates in cell wall biogenesis; peptidoglycan biosynthesis. In terms of biological role, cell wall formation. This is D-alanine--D-alanine ligase from Corynebacterium glutamicum (strain ATCC 13032 / DSM 20300 / JCM 1318 / BCRC 11384 / CCUG 27702 / LMG 3730 / NBRC 12168 / NCIMB 10025 / NRRL B-2784 / 534).